Reading from the N-terminus, the 133-residue chain is uncharacterized protein (133 aa).

Transmembrane regions (helical) follow at residues 5–27, 42–64, 77–99, and 103–125; these read KLFF…FSLI, IAWN…YSLY, ALIS…TFSS, and LVWW…LLLK.

The protein resides in the cell membrane. This is an uncharacterized protein from Bacillus subtilis (strain 168).